Consider the following 500-residue polypeptide: L-arabinose isomerase (500 aa).

Glutamate 306, glutamate 333, histidine 349, and histidine 448 together coordinate Mn(2+).

This sequence belongs to the arabinose isomerase family. Mn(2+) is required as a cofactor.

It catalyses the reaction beta-L-arabinopyranose = L-ribulose. It participates in carbohydrate degradation; L-arabinose degradation via L-ribulose; D-xylulose 5-phosphate from L-arabinose (bacterial route): step 1/3. Catalyzes the conversion of L-arabinose to L-ribulose. The protein is L-arabinose isomerase of Saccharophagus degradans (strain 2-40 / ATCC 43961 / DSM 17024).